The sequence spans 595 residues: Tectonic-3 (595 aa).

Residues 1–22 (MCTLQLHLLLLVVLMLSETARP) form the signal peptide. A disordered region spans residues 23–62 (QPSSTARAFPTSWGLEPVTPEVPTSAPPDSSESPTPWTLS). At 23–575 (QPSSTARAFP…ALSRGASVQK (553 aa)) the chain is on the extracellular side. Residues 49–62 (PPDSSESPTPWTLS) show a composition bias toward polar residues. N-linked (GlcNAc...) asparagine glycans are attached at residues Asn167 and Asn336. Residues 576-594 (DSLVLILCVLLLGLLNSQT) form a helical membrane-spanning segment. Position 595 (Lys595) is a topological domain, cytoplasmic.

Belongs to the tectonic family. In terms of assembly, part of the tectonic-like complex (also named B9 complex).

The protein localises to the membrane. In terms of biological role, part of the tectonic-like complex which is required for tissue-specific ciliogenesis and may regulate ciliary membrane composition. May be involved in apoptosis regulation. Necessary for signal transduction through the sonic hedgehog (Shh) signaling pathway. This chain is Tectonic-3 (Tctn3), found in Mus musculus (Mouse).